Consider the following 1194-residue polypeptide: Pre-mRNA-processing ATP-dependent RNA helicase prp-5 (1194 aa).

Disordered stretches follow at residues 1–201, 224–248, and 452–484; these read MARL…KEAK, AVVGSGTNSPAPASPAAAESPASPA, and ASGEESHSKADTLTEKKNGNIPPEAYFSDDDYG. 2 stretches are compositionally biased toward basic and acidic residues: residues 21–37 and 44–154; these read RKDDDRRDRDRRDGPVD and SPID…RDQP. Positions 156 to 176 are enriched in polar residues; it reads PGNTTAKENEPAKSTPTQPQT. A compositionally biased stretch (basic and acidic residues) spans 177-186; that stretch reads EAEKKAERLR. Residues 232–248 are compositionally biased toward low complexity; sequence SPAPASPAAAESPASPA. The segment covering 455-469 has biased composition (basic and acidic residues); the sequence is EESHSKADTLTEKKN. Positions 561 to 589 match the Q motif motif; sequence QKWSQCGLTRPILDTIESLGFEKPTPIQM. The Helicase ATP-binding domain occupies 592–770; the sequence is LPVIMSGRDV…KKVLRDPVEI (179 aa). 605 to 612 serves as a coordination point for ATP; sequence AKTGSGKT. Positions 718 to 721 match the DEAD box motif; the sequence is DEAD. The Helicase C-terminal domain maps to 797 to 945; the sequence is RLLELLGELY…PVPDRLNEMR (149 aa). Disordered regions lie at residues 952–1011 and 1025–1056; these read VKAG…DKTK and DASKAETEDKHAIPAGAVKAGHHASSGKSGGA. 3 stretches are compositionally biased toward basic and acidic residues: residues 967 to 980, 997 to 1011, and 1025 to 1036; these read GLEKLDKDREAARM, EDAPAEDGEKKDKTK, and DASKAETEDKHA.

Belongs to the DEAD box helicase family. DDX46/PRP5 subfamily.

The protein localises to the nucleus. It carries out the reaction ATP + H2O = ADP + phosphate + H(+). In terms of biological role, ATP-dependent RNA helicase involved spliceosome assembly and in nuclear splicing. Catalyzes an ATP-dependent conformational change of U2 snRNP. Bridges U1 and U2 snRNPs and enables stable U2 snRNP association with intron RNA. In Neurospora crassa (strain ATCC 24698 / 74-OR23-1A / CBS 708.71 / DSM 1257 / FGSC 987), this protein is Pre-mRNA-processing ATP-dependent RNA helicase prp-5 (prp-5).